The following is a 636-amino-acid chain: 1-deoxy-D-xylulose-5-phosphate synthase (636 aa).

Thiamine diphosphate contacts are provided by residues H75 and 116–118 (AHS). Residue D147 coordinates Mg(2+). Residues 148–149 (GA), N177, Y288, and E370 contribute to the thiamine diphosphate site. Mg(2+) is bound at residue N177.

Belongs to the transketolase family. DXPS subfamily. As to quaternary structure, homodimer. Mg(2+) is required as a cofactor. It depends on thiamine diphosphate as a cofactor.

The enzyme catalyses D-glyceraldehyde 3-phosphate + pyruvate + H(+) = 1-deoxy-D-xylulose 5-phosphate + CO2. Its pathway is metabolic intermediate biosynthesis; 1-deoxy-D-xylulose 5-phosphate biosynthesis; 1-deoxy-D-xylulose 5-phosphate from D-glyceraldehyde 3-phosphate and pyruvate: step 1/1. Catalyzes the acyloin condensation reaction between C atoms 2 and 3 of pyruvate and glyceraldehyde 3-phosphate to yield 1-deoxy-D-xylulose-5-phosphate (DXP). In Ralstonia pickettii (strain 12J), this protein is 1-deoxy-D-xylulose-5-phosphate synthase.